The sequence spans 102 residues: Urease subunit beta (102 aa).

The protein belongs to the urease beta subunit family. In terms of assembly, heterotrimer of UreA (gamma), UreB (beta) and UreC (alpha) subunits. Three heterotrimers associate to form the active enzyme.

It is found in the cytoplasm. It carries out the reaction urea + 2 H2O + H(+) = hydrogencarbonate + 2 NH4(+). It functions in the pathway nitrogen metabolism; urea degradation; CO(2) and NH(3) from urea (urease route): step 1/1. This Acinetobacter baylyi (strain ATCC 33305 / BD413 / ADP1) protein is Urease subunit beta.